The following is a 186-amino-acid chain: TATA box-binding protein-like 1 (186 aa).

Belongs to the TBP family. In terms of assembly, binds TFIIA and TFIIB.

The protein localises to the cytoplasm. Its subcellular location is the nucleus. Its function is as follows. Part of a specialized transcription system that mediates the transcription of most ribosomal proteins through the 5'-TCT-3' motif which is a core promoter element at these genes. Seems to also mediate the transcription of NF1. Does not bind the TATA box. The sequence is that of TATA box-binding protein-like 1 (TBPL1) from Bos taurus (Bovine).